The primary structure comprises 109 residues: Nucleoid-associated protein Caul_4574 (109 aa).

It belongs to the YbaB/EbfC family. In terms of assembly, homodimer.

The protein resides in the cytoplasm. It is found in the nucleoid. In terms of biological role, binds to DNA and alters its conformation. May be involved in regulation of gene expression, nucleoid organization and DNA protection. The chain is Nucleoid-associated protein Caul_4574 from Caulobacter sp. (strain K31).